Consider the following 475-residue polypeptide: UDP-N-acetylmuramate--L-alanine ligase (475 aa).

114 to 120 provides a ligand contact to ATP; the sequence is GTHGKTT.

Belongs to the MurCDEF family.

The protein resides in the cytoplasm. It carries out the reaction UDP-N-acetyl-alpha-D-muramate + L-alanine + ATP = UDP-N-acetyl-alpha-D-muramoyl-L-alanine + ADP + phosphate + H(+). It functions in the pathway cell wall biogenesis; peptidoglycan biosynthesis. Cell wall formation. The chain is UDP-N-acetylmuramate--L-alanine ligase from Bartonella henselae (strain ATCC 49882 / DSM 28221 / CCUG 30454 / Houston 1) (Rochalimaea henselae).